Here is a 212-residue protein sequence, read N- to C-terminus: Endothelin-1 (212 aa).

The signal sequence occupies residues 1–17; the sequence is MDYLLMIFSLLFVACQG. The propeptide occupies 18–50; that stretch reads APETAVLGAELSAVGENGGEKPTPSPPWRLRRS. Disulfide bonds link Cys-53–Cys-67 and Cys-55–Cys-63. A propeptide spanning residues 74-212 is cleaved from the precursor; the sequence is VNTPEHVVPY…RYVTHNRAHW (139 aa). The interval 109–123 is endothelin-like; sequence CQCASQKDKKCWNFC. 2 stretches are compositionally biased toward basic and acidic residues: residues 168–181 and 189–205; these read RSSEEHLRQTRSET and SFHDPKLKGKPSRERYV. A disordered region spans residues 168–212; the sequence is RSSEEHLRQTRSETMRNSVKSSFHDPKLKGKPSRERYVTHNRAHW.

Belongs to the endothelin/sarafotoxin family. As to expression, expressed in lung, placental stem villi vessels and in cultured placental vascular smooth muscle cells.

The protein resides in the secreted. In terms of biological role, endothelins are endothelium-derived vasoconstrictor peptides. Probable ligand for G-protein coupled receptors EDNRA and EDNRB which activates PTK2B, BCAR1, BCAR3 and, GTPases RAP1 and RHOA cascade in glomerular mesangial cells. Also binds the DEAR/FBXW7-AS1 receptor. Promotes mesenteric arterial wall remodeling via activation of ROCK signaling and subsequent colocalization of NFATC3 with F-actin filaments. NFATC3 then translocates to the nucleus where it subsequently promotes the transcription of the smooth muscle hypertrophy and differentiation marker ACTA2. The polypeptide is Endothelin-1 (EDN1) (Homo sapiens (Human)).